Reading from the N-terminus, the 185-residue chain is Ribosome-recycling factor (185 aa).

Positions 136-161 are disordered; sequence MDSLKTDEKKGEIGEDDRKRRETEVQ.

Belongs to the RRF family.

The protein resides in the cytoplasm. Responsible for the release of ribosomes from messenger RNA at the termination of protein biosynthesis. May increase the efficiency of translation by recycling ribosomes from one round of translation to another. The protein is Ribosome-recycling factor of Rhizorhabdus wittichii (strain DSM 6014 / CCUG 31198 / JCM 15750 / NBRC 105917 / EY 4224 / RW1) (Sphingomonas wittichii).